A 508-amino-acid chain; its full sequence is MGVRDSHGEAAGTPDPVEKGIATLNTIRIGVKAMVHKDGALRKAEILSIKQRKDGLAFYVHYVDFNKRLDEWVASSRLDLSQEVEWPQPEKPEKKKSGPAKAPSKNKRVRAGSRDVSATPDTLTGKNTNVGKAQRPSKAGGKENRGDETPADLSMLASEAVSADGTPKAVSEDIDMMDASFTDAKEIKEEERALGLMSREEEIEKLRTSGSMTQNPTEVHRVRNLDRLQMGKYDIEPWYFSPYPASFSDAEVVYIDEFCLSYFDNKRAFERHRTKCTLTHPPGNEIYRDDNISFFEVDGRRQRTWCRNLCLLSKLFLDHKTLYYDVDPFLFYCMCTRDETGCHLVGYFSKEKESGEGYNLACILTLPQYQRRGYGRLLISFSYELSKREGKVGSPEKPLSDLGLLGYRQYWRETLVEILLDSGRETVSENELAMLTSMTEKDVHETLVTFKMLRYNKGQWIIVLTDEVIEERNKRLEKEKIKGSRKIDPARLQWKPPVFTASSRTWNW.

Positions 27–80 constitute a Tudor-knot domain; the sequence is IRIGVKAMVHKDGALRKAEILSIKQRKDGLAFYVHYVDFNKRLDEWVASSRLDL. The disordered stretch occupies residues 84–150; sequence VEWPQPEKPE…GKENRGDETP (67 aa). Positions 119–131 are enriched in polar residues; that stretch reads TPDTLTGKNTNVG. In terms of domain architecture, MYST-type HAT spans 220 to 496; it reads HRVRNLDRLQ…IDPARLQWKP (277 aa). A C2HC MYST-type; degenerate zinc finger spans residues 253–278; sequence VYIDEFCLSYFDNKRAFERHRTKCTL. The short motif at 303 to 324 is the ESA1-RPD3 motif element; sequence RTWCRNLCLLSKLFLDHKTLYY. The residue at position 320 (K320) is an N6-acetyllysine; by autocatalysis. Residues 361–365 and 370–376 each bind acetyl-CoA; these read ACILT and QRRGYGR. E396 serves as the catalytic Proton donor/acceptor. S400 lines the acetyl-CoA pocket.

The protein belongs to the MYST (SAS/MOZ) family. In terms of assembly, component of the NuA4 histone acetyltransferase complex. Post-translationally, autoacetylation at Lys-320 is required for proper function.

It is found in the nucleus. Its subcellular location is the chromosome. It carries out the reaction L-lysyl-[histone] + acetyl-CoA = N(6)-acetyl-L-lysyl-[histone] + CoA + H(+). The catalysed reaction is L-lysyl-[protein] + acetyl-CoA = N(6)-acetyl-L-lysyl-[protein] + CoA + H(+). It catalyses the reaction 2-hydroxyisobutanoyl-CoA + L-lysyl-[protein] = N(6)-(2-hydroxyisobutanoyl)-L-lysyl-[protein] + CoA + H(+). The enzyme catalyses (2E)-butenoyl-CoA + L-lysyl-[protein] = N(6)-(2E)-butenoyl-L-lysyl-[protein] + CoA + H(+). Functionally, catalytic component of the NuA4 histone acetyltransferase (HAT) complex which is involved in epigenetic transcriptional activation of selected genes principally by acetylation of nucleosomal histones H4, H3, H2B, H2A and H2A variant H2A.Z. Acetylates histone H4 to form H4K5ac, H4K8ac, H4K12ac and H4K16ac, histone H3 to form H3K14ac, and histone H2A to form H2AK4ac and H2AK7ac. The NuA4 complex is involved in the DNA damage response and is required for chromosome segregation. The NuA4 complex plays a direct role in repair of DNA double-strand breaks (DSBs) through homologous recombination. Recruitment to promoters depends on H3K4me. Also acetylates non-histone proteins. In addition to protein acetyltransferase, can use different acyl-CoA substrates, such as 2-hydroxyisobutanoyl-CoA (2-hydroxyisobutyryl-CoA) or (2E)-butenoyl-CoA (crotonyl-CoA), and is able to mediate protein 2-hydroxyisobutyrylation and crotonylation, respectively. This chain is Histone acetyltransferase esa1 (esa1), found in Emericella nidulans (strain FGSC A4 / ATCC 38163 / CBS 112.46 / NRRL 194 / M139) (Aspergillus nidulans).